Here is a 144-residue protein sequence, read N- to C-terminus: Heme transporter hrg1-B (144 aa).

Helical transmembrane passes span 6–26 (IYIS…AFIV), 38–58 (AMGG…IMYI), 71–91 (FFMF…ATFI), and 107–127 (FYLS…LGLY). Residues 140–141 (IL) carry the Di-leucine motif motif.

Belongs to the HRG family.

The protein resides in the endosome membrane. Its subcellular location is the lysosome membrane. It is found in the cytoplasmic vesicle. It localises to the phagosome membrane. It catalyses the reaction heme b(in) = heme b(out). Heme transporter that regulates intracellular heme availability through the endosomal or lysosomal compartment. In macrophages, is the heme transporter for heme-iron recycling. Essential for macrophage iron homeostasis, transports heme from the phagolysosome to the cytoplasm during erythrophagocytosis (EP). In Danio rerio (Zebrafish), this protein is Heme transporter hrg1-B (slc48a1a).